A 237-amino-acid polypeptide reads, in one-letter code: Large ribosomal subunit protein uL3 (237 aa).

2 disordered regions span residues 133 to 155 and 213 to 237; these read ASHG…DPGK and PENA…EGAE. Over residues 135–150 the composition is skewed to polar residues; the sequence is HGNSITHRSHGSTGQR. Gln-151 bears the N5-methylglutamine mark. Over residues 220 to 237 the composition is skewed to low complexity; sequence AGLRAGAKAEAAATEGAE.

This sequence belongs to the universal ribosomal protein uL3 family. In terms of assembly, part of the 50S ribosomal subunit. Forms a cluster with proteins L14 and L19. Post-translationally, methylated by PrmB.

Functionally, one of the primary rRNA binding proteins, it binds directly near the 3'-end of the 23S rRNA, where it nucleates assembly of the 50S subunit. The protein is Large ribosomal subunit protein uL3 of Brucella canis (strain ATCC 23365 / NCTC 10854 / RM-666).